A 542-amino-acid polypeptide reads, in one-letter code: Peptide chain release factor 3 (542 aa).

One can recognise a tr-type G domain in the interval 14-283 (ELRRNFAIIS…YFLEYALKPG (270 aa)). Residues 23-30 (SHPDAGKT), 91-95 (DTPGH), and 145-148 (NKLD) contribute to the GTP site.

It belongs to the TRAFAC class translation factor GTPase superfamily. Classic translation factor GTPase family. PrfC subfamily.

The protein resides in the cytoplasm. Its function is as follows. Increases the formation of ribosomal termination complexes and stimulates activities of RF-1 and RF-2. It binds guanine nucleotides and has strong preference for UGA stop codons. It may interact directly with the ribosome. The stimulation of RF-1 and RF-2 is significantly reduced by GTP and GDP, but not by GMP. This Nostoc punctiforme (strain ATCC 29133 / PCC 73102) protein is Peptide chain release factor 3.